The following is a 648-amino-acid chain: MDRVTRYPIFSNPRSARVTSLVLDEDTSYTVELVGVGPEAGWSQGDLQAWSTEYQTRPDVKRTNVSSNRRVFLGQQSPRSLYLEDEDEEIKSYHLDDSSDTLCRQRRELEAERWAVIQSQAVRKGGTVATLQAASDHGDLRIARQPQSTVTEEILVDTEQIDFLAARQQFLSLEKANTNPVPCGLTARETFPRTPPGINQAPKASTGPHLANGYTTAVTSPMKEVTLEKSFHVSPARSIHIVNDPGSQTQAESPETPKETPIEREIRLAQEREAELREQRGLGRAAGHQELVQIPSRPLLSKMSLTETPPRRDRGRPSLYVQRDMVQETQREEDHRREGLQVGRASTPDWPSQDPQPGLQRSLSSDCILSPDARATDPAPEARKVNRIPLDAYQPYLGPGTPKLEFSAFGVYSKPSGVSTEDTKATVFQKATESPRHVSESSGRSLSSKQEWSKPPGKATNVGVVRLGNFHLRPLRFKVPDVPQGTETPHTWGWEVAGGPILRLQKSQSSDLLEREMESVLRREREVAEERRNAFFPEVFSPVPAEDESHEQDSRSSSRASGITGSYSVSESPLFTPVHLNSGLVWKVEAPEDSAPPGQKTRKEMWYAGINPSDSVNSEVLGATRVKRHKNLLAERWEAHIYASEDEN.

Ser-77 carries the post-translational modification Phosphoserine; by CDK1. Phosphothreonine occurs at positions 149 and 190. Ser-220 is subject to Phosphoserine. Disordered stretches follow at residues 242 to 383 (VNDP…PEAR) and 430 to 460 (KATE…GKAT). Phosphoserine; by CDK1 is present on Ser-253. The span at 255-281 (ETPKETPIEREIRLAQEREAELREQRG) shows a compositional bias: basic and acidic residues. Residue Thr-256 is modified to Phosphothreonine; by CDK1. Residue Ser-318 is modified to Phosphoserine. The segment covering 325–339 (MVQETQREEDHRREG) has biased composition (basic and acidic residues). At Thr-347 the chain carries Phosphothreonine; by CDK1. Over residues 349–367 (DWPSQDPQPGLQRSLSSDC) the composition is skewed to polar residues. A phosphoserine mark is found at Ser-352 and Ser-364. Residues Ser-365 and Ser-439 each carry the phosphoserine; by PLK1 modification. Positions 440–450 (ESSGRSLSSKQ) are enriched in polar residues. 2 positions are modified to phosphoserine: Ser-507 and Ser-509. Residues 511 to 534 (DLLEREMESVLRREREVAEERRNA) are a coiled coil. The interval 539 to 568 (VFSPVPAEDESHEQDSRSSSRASGITGSYS) is disordered. Residue Ser-541 is modified to Phosphoserine; by CDK1. The residue at position 554 (Ser-554) is a Phosphoserine; by PLK1. Residues 557–568 (SSRASGITGSYS) are compositionally biased toward polar residues. Ser-644 carries the post-translational modification Phosphoserine.

It belongs to the MISP family. As to quaternary structure, associates with F-actin. Interacts with DCTN1; this interaction regulates DCTN1 distribution at the cell cortex. Interacts with PTK2/FAK and MAPRE1. Phosphorylated by CDK1 and PLK1. CDK1 is the priming kinase for PLK1 phosphorylation. Phosphorylation by PLK1 is required for proper spindle orientation at metaphase.

The protein resides in the cell junction. It is found in the focal adhesion. Its subcellular location is the cytoplasm. It localises to the cytoskeleton. The protein localises to the cell cortex. Plays a role in mitotic spindle orientation and mitotic progression. Regulates the distribution of dynactin at the cell cortex in a PLK1-dependent manner, thus stabilizing cortical and astral microtubule attachments required for proper mitotic spindle positioning. May link microtubules to the actin cytoskeleton and focal adhesions. May be required for directed cell migration and centrosome orientation. May also be necessary for proper stacking of the Golgi apparatus. This chain is Mitotic interactor and substrate of PLK1, found in Mus musculus (Mouse).